The primary structure comprises 209 residues: MQLSANQQRIIGCLLEKQSTTPEHYPLSLNALTNACNQKSNRAPVLNLTDSEVQIALDELINARLVTIDEGLSGRVNKYDHRFCNTEFSSLKFSAQQRAIICLLLLRGAQTPGELKTRCARLANFNSVDDVELALNKLIESDIVTKLAREPGKRDCRYMHLLGEQPISEITRPAEQATDELKSEELNELLAEVDELKTELQKIKAHLGL.

Belongs to the UPF0502 family.

The protein is UPF0502 protein PSHAa0076 of Pseudoalteromonas translucida (strain TAC 125).